The sequence spans 354 residues: Biotin synthase (354 aa).

In terms of domain architecture, Radical SAM core spans 41–268; that stretch reads NEVQISRLLS…LSRVRLSAGR (228 aa). Positions 56, 60, and 63 each coordinate [4Fe-4S] cluster. 4 residues coordinate [2Fe-2S] cluster: cysteine 100, cysteine 131, cysteine 191, and arginine 263.

This sequence belongs to the radical SAM superfamily. Biotin synthase family. In terms of assembly, homodimer. The cofactor is [4Fe-4S] cluster. [2Fe-2S] cluster is required as a cofactor.

It carries out the reaction (4R,5S)-dethiobiotin + (sulfur carrier)-SH + 2 reduced [2Fe-2S]-[ferredoxin] + 2 S-adenosyl-L-methionine = (sulfur carrier)-H + biotin + 2 5'-deoxyadenosine + 2 L-methionine + 2 oxidized [2Fe-2S]-[ferredoxin]. It participates in cofactor biosynthesis; biotin biosynthesis; biotin from 7,8-diaminononanoate: step 2/2. Functionally, catalyzes the conversion of dethiobiotin (DTB) to biotin by the insertion of a sulfur atom into dethiobiotin via a radical-based mechanism. This Shewanella amazonensis (strain ATCC BAA-1098 / SB2B) protein is Biotin synthase.